The primary structure comprises 297 residues: Halorhodopsin (297 aa).

Positions 1-31 (MRSRTYHDQSVCGPYGSQRTDCDRDTDAGSD) are disordered. The Extracellular portion of the chain corresponds to 1–45 (MRSRTYHDQSVCGPYGSQRTDCDRDTDAGSDTDVHGAQVATQIRT). The helical transmembrane segment at 46 to 71 (DTLLHSSLWVNIALAGLSILVFLYMA) threads the bilayer. At 72-77 (RTVRAN) the chain is on the cytoplasmic side. The chain crosses the membrane as a helical span at residues 78–101 (RARLIVGATLMIPLVSLSSYLGLV). Topologically, residues 102–125 (TGLTAGPIEMPAAHALAGEDVLSQ) are extracellular. Residues 126–147 (WGRYLTWTLSTPMILLALGWLA) form a helical membrane-spanning segment. Over 148-150 (EVD) the chain is Cytoplasmic. The helical transmembrane segment at 151–174 (TADLFVVIAADIGMCLTGLAAALT) threads the bilayer. Topologically, residues 175–177 (TSS) are extracellular. A helical membrane pass occupies residues 178 to 200 (YAFRWAFYLVSTAFFVVVLYALL). The Cytoplasmic portion of the chain corresponds to 201-212 (AKWPTNAEAAGT). Residues 213-236 (GDIFGTLRWLTVILWLGYPILWAL) form a helical membrane-spanning segment. At 237-246 (GVEGFALVDS) the chain is on the extracellular side. The helical transmembrane segment at 247 to 275 (VGLTSWGYSLLDIGAKYLFAALLLRWVAN) threads the bilayer. Lys262 carries the post-translational modification N6-(retinylidene)lysine. At 276–297 (NERTIAVGQRSGRGAIGDPVED) the chain is on the cytoplasmic side.

Belongs to the archaeal/bacterial/fungal opsin family.

It localises to the cell membrane. Its function is as follows. Light-driven chloride pump. This chain is Halorhodopsin (hop), found in Haloterrigena sp. (strain arg-4).